Reading from the N-terminus, the 564-residue chain is Formate--tetrahydrofolate ligase (564 aa).

65–72 is a binding site for ATP; it reads TPLGEGKT.

This sequence belongs to the formate--tetrahydrofolate ligase family.

The catalysed reaction is (6S)-5,6,7,8-tetrahydrofolate + formate + ATP = (6R)-10-formyltetrahydrofolate + ADP + phosphate. Its pathway is one-carbon metabolism; tetrahydrofolate interconversion. This Roseiflexus castenholzii (strain DSM 13941 / HLO8) protein is Formate--tetrahydrofolate ligase.